We begin with the raw amino-acid sequence, 535 residues long: Potassium channel subfamily K member 10 (535 aa).

The Cytoplasmic segment spans residues 1 to 68; it reads MYFSYIGYFF…GLQTVMKWKT (68 aa). The chain crosses the membrane as a helical span at residues 69–89; that stretch reads VVAIFVVVVVYLVTGGLVFRA. The segment at residues 151–177 is an intramembrane region (pore-forming); sequence LGSAFFFAGTVITTIGYGNIAPSTEGG. Threonine 164, isoleucine 165, glycine 166, and tyrosine 167 together coordinate K(+). Residues 164–169 are selectivity filter 1; it reads TIGYGN. A helical transmembrane segment spans residues 179 to 199; it reads IFCILYAIFGIPLFGFLLAGI. Residues 200–230 are Cytoplasmic-facing; that stretch reads GDQLGTIFGKSIARVEKVFRKKQVSQTKIRV. The chain crosses the membrane as a helical span at residues 231–251; sequence ISTILFILAGCIVFVTIPAVI. An intramembrane region (pore-forming) is located at residues 260–291; sequence ALESIYFVVVTLTTVGFGDFVAGGNAGINYRE. K(+)-binding residues include threonine 273, valine 274, glycine 275, and phenylalanine 276. Residues 273 to 278 are selectivity filter 2; that stretch reads TVGFGD. A helical membrane pass occupies residues 296 to 316; the sequence is LVWFWILVGLAYFAAVLSMIG. Residues 317-535 lie on the Cytoplasmic side of the membrane; that stretch reads DWLRVLSKKT…ENNSLLEDRN (219 aa). Disordered stretches follow at residues 410–438 and 510–535; these read QESI…ASED and EMEN…EDRN. Polar residues predominate over residues 525 to 535; it reads LENNSLLEDRN.

Homodimer; disulfide-linked. Forms heterodimers with other 2-pore domain K(+) channel subunits, such as KCNK2, KCNK4 and KCNK18. As to expression, detected in dorsal root ganglia (DRG) neurons (at protein level).

The protein resides in the cell membrane. The catalysed reaction is K(+)(in) = K(+)(out). It catalyses the reaction Rb(+)(in) = Rb(+)(out). The enzyme catalyses Cs(+)(in) = Cs(+)(out). With respect to regulation, activated by stimuli such as mechanical stretch, acidic pH and polyunsaturated free fatty acids. Activated by a dihydroacridine analog, ML67-33. Inhibited by polycationic dye ruthenium red. Selectively activated by T2A3 (2-[(4-chloro-3-methylphenyl)amino] benzoic acid). Functionally, k(+) channel that conducts voltage-dependent outward rectifying currents upon membrane depolarization. Voltage sensing is coupled to K(+) electrochemical gradient in an 'ion flux gating' mode where outward but not inward ion flow opens the gate. Converts to voltage-independent 'leak' conductance mode upon stimulation by various stimuli including mechanical membrane stretch, acidic pH, heat and lipids. Homo- and heterodimerizes to form functional channels with distinct regulatory and gating properties. In trigeminal ganglia sensory neurons, the heterodimer of KCNK10/TREK-2 and KCNK18/TRESK inhibits neuronal firing and neurogenic inflammation by stabilizing the resting membrane potential at K(+) equilibrium potential as well as by regulating the threshold of action potentials and the spike frequency. Permeable to other monovalent ions such as Rb(+) and Cs(+). The protein is Potassium channel subfamily K member 10 of Mus musculus (Mouse).